The primary structure comprises 139 residues: ATP synthase epsilon chain (139 aa).

It belongs to the ATPase epsilon chain family. F-type ATPases have 2 components, CF(1) - the catalytic core - and CF(0) - the membrane proton channel. CF(1) has five subunits: alpha(3), beta(3), gamma(1), delta(1), epsilon(1). CF(0) has three main subunits: a, b and c.

The protein resides in the cell membrane. Produces ATP from ADP in the presence of a proton gradient across the membrane. This chain is ATP synthase epsilon chain, found in Roseiflexus sp. (strain RS-1).